The primary structure comprises 463 residues: Succinate--CoA ligase [ADP-forming] subunit beta, mitochondrial (463 aa).

The N-terminal 53 residues, 1–53, are a transit peptide targeting the mitochondrion; that stretch reads MAASMFYGRQLAAAALRSHRPQTTLRAAAQVLGNSGLFNKHGLQVQQQQQRTL. Residues 61–288 enclose the ATP-grasp domain; sequence MELLQEAGVS…SNSAYRQKKI (228 aa). K78 bears the N6-acetyllysine mark. Residue Y84 is modified to Phosphotyrosine. Position 88 is an N6-acetyllysine; alternate (K88). At K88 the chain carries N6-succinyllysine; alternate. ATP contacts are provided by residues K98 and 105–107; that span reads GRG. 4 positions are modified to N6-acetyllysine: K129, K139, K143, and K216. Mg(2+) contacts are provided by N258 and D272. S279 is modified (phosphoserine). N323 contributes to the substrate binding site. Position 341 is a phosphothreonine (T341). K368 is subject to N6-acetyllysine. Substrate is bound at residue 380 to 382; the sequence is GIM. K438 carries the post-translational modification N6-acetyllysine.

It belongs to the succinate/malate CoA ligase beta subunit family. ATP-specific subunit beta subfamily. As to quaternary structure, heterodimer of an alpha and a beta subunit. The beta subunit determines specificity for ATP. Interacts with ALAS2. It depends on Mg(2+) as a cofactor.

The protein localises to the mitochondrion. It carries out the reaction succinate + ATP + CoA = succinyl-CoA + ADP + phosphate. It participates in carbohydrate metabolism; tricarboxylic acid cycle; succinate from succinyl-CoA (ligase route): step 1/1. ATP-specific succinyl-CoA synthetase functions in the citric acid cycle (TCA), coupling the hydrolysis of succinyl-CoA to the synthesis of ATP and thus represents the only step of substrate-level phosphorylation in the TCA. The beta subunit provides nucleotide specificity of the enzyme and binds the substrate succinate, while the binding sites for coenzyme A and phosphate are found in the alpha subunit. This chain is Succinate--CoA ligase [ADP-forming] subunit beta, mitochondrial, found in Mus musculus (Mouse).